Here is a 110-residue protein sequence, read N- to C-terminus: Acylphosphatase (110 aa).

The Acylphosphatase-like domain occupies 24-110 (RVRVYVSGRV…SGGARGFEVR (87 aa)). Active-site residues include Arg39 and Asn57.

This sequence belongs to the acylphosphatase family.

The catalysed reaction is an acyl phosphate + H2O = a carboxylate + phosphate + H(+). The chain is Acylphosphatase (acyP) from Rubrobacter xylanophilus (strain DSM 9941 / JCM 11954 / NBRC 16129 / PRD-1).